Reading from the N-terminus, the 427-residue chain is MKLSTNVKGLKGRIRVPGDKSISHRSIIFGSLAKGVTTVRDILRGEDVLSTMQVFRDLGVQIEDDGNLVKIHGVGFEGLQAPKNKLDMGNSGTSIRLISGVLAGQDFEAEMFGDDSLSKRPMDRVTIPLRQMGVEIAGRTERDLPPLKMKGSRELQPIHYQLPVASAQVKSALIFAALQAQGESVIIEKEITRNHTEDMIAQFGGQIEVEGKEIRIQGGQEFTAQEVTVPGDISSAAFWLVAGLIVPDSKIVLENVGINETRTGILEVIEAMGGRMTLSDVDPVAKSATITVETSELKGTEIGGEIIPRLIDELPIIALLATQAQGRTVIRDAEELKVKETDRIQVVADALNSMGAAITPTEDGMIIEGKTPLHGAQVNTLGDHRIGMMTAIAALLAQSSQVELERSEAIKTSYPNFFNDLEGLMHG.

Residues Lys-20, Ser-21, and Arg-25 each coordinate 3-phosphoshikimate. Position 20 (Lys-20) interacts with phosphoenolpyruvate. Residues Gly-92 and Arg-120 each contribute to the phosphoenolpyruvate site. Positions 166, 168, 312, and 339 each coordinate 3-phosphoshikimate. Gln-168 provides a ligand contact to phosphoenolpyruvate. Asp-312 (proton acceptor) is an active-site residue. The phosphoenolpyruvate site is built by Arg-343 and Arg-385.

It belongs to the EPSP synthase family. In terms of assembly, monomer.

The protein resides in the cytoplasm. The catalysed reaction is 3-phosphoshikimate + phosphoenolpyruvate = 5-O-(1-carboxyvinyl)-3-phosphoshikimate + phosphate. It participates in metabolic intermediate biosynthesis; chorismate biosynthesis; chorismate from D-erythrose 4-phosphate and phosphoenolpyruvate: step 6/7. Functionally, catalyzes the transfer of the enolpyruvyl moiety of phosphoenolpyruvate (PEP) to the 5-hydroxyl of shikimate-3-phosphate (S3P) to produce enolpyruvyl shikimate-3-phosphate and inorganic phosphate. The polypeptide is 3-phosphoshikimate 1-carboxyvinyltransferase (Streptococcus sanguinis (strain SK36)).